The chain runs to 55 residues: uncharacterized protein (55 aa).

The next 2 helical transmembrane spans lie at 2–19 (VIGLFVLSIVMLIVSFIA) and 24–46 (LLSIMISFLLFTSAVVLAMFRYF).

Its subcellular location is the cell membrane. This is an uncharacterized protein from Alkalihalophilus pseudofirmus (strain ATCC BAA-2126 / JCM 17055 / OF4) (Bacillus pseudofirmus).